Consider the following 1340-residue polypeptide: Protein SHORT ROOT IN SALT MEDIUM 1 (1340 aa).

Disordered stretches follow at residues 1-73, 161-185, 357-473, 723-750, 784-990, and 1063-1269; these read MHRD…RSHL, YGEQ…ADPS, EEER…IRRS, TVEV…KKTV, PETT…PPRA, and RNQR…KREE. Residues 7 to 39 are compositionally biased toward low complexity; that stretch reads SSRGTGYGQQQYGSQSGYSQNLGSGYPGSSVSG. Over residues 46 to 60 the composition is skewed to polar residues; sequence QISLSSRHPSITGAP. 3 stretches are compositionally biased toward basic and acidic residues: residues 173–182, 357–470, and 723–735; these read LQNEPTRRYA, EEER…EASI, and TVEV…KKSP. A coiled-coil region spans residues 355–426; that stretch reads LREEERRRED…RERKRALEIK (72 aa). Positions 810 to 824 are enriched in polar residues; that stretch reads GDTSDPSAKANEQTP. Positions 828 to 840 are enriched in basic residues; that stretch reads IVKKKIIKRVAKR. Composition is skewed to basic and acidic residues over residues 841 to 872, 887 to 988, 1069 to 1097, and 1105 to 1138; these read KVAE…KKSS, EDVK…EEPP, HQEE…DKEA, and PGKD…ETLG. Residues 1052 to 1086 adopt a coiled-coil conformation; sequence LKKLRVKIVRQRNQRKRHQEELSVKQNEAKSQDKR. Residues 1153–1204 are compositionally biased toward acidic residues; sequence ENQDEEDDDGDDDPEEDPEEDPEEDPEEDPEEDPEECEEMDVANTEQEEPAE. Basic and acidic residues-rich tracts occupy residues 1205-1214 and 1229-1257; these read EPQKKEENLE and TDNR…HGKQ. Residues 1270–1305 form the EF-hand domain; the sequence is TVDKELLQAFRFFDRNQAGYVRVEDMRVTIHSLGKF.

In terms of assembly, interacts with BHLH148/RITF1. Expressed ubiquitously at high levels, including in guard cells.

It localises to the nucleus. Its function is as follows. Required for salt tolerance and sodium (Na) homeostasis after salt stress. Together with BHLH148/RITF1, regulates the transcription of several genes involved in the detoxification of reactive oxygen species (ROS) generated by salt (NaCl) stress. Binds calcium. This chain is Protein SHORT ROOT IN SALT MEDIUM 1, found in Arabidopsis thaliana (Mouse-ear cress).